An 853-amino-acid chain; its full sequence is Bromodomain-containing protein bet-1 (853 aa).

Residues 1–19 are compositionally biased toward polar residues; sequence MSEGSGDQSQQRPWASPRQ. 2 disordered regions span residues 1 to 22 and 141 to 245; these read MSEG…QQPI and SLEQ…LRAK. The region spanning 39–145 is the Bromo 1 domain; sequence RHTNKLDYIM…EVIKKSLEQA (107 aa). Basic and acidic residues predominate over residues 141 to 153; it reads SLEQAPREEHDMD. Low complexity-rich tracts occupy residues 166 to 175 and 192 to 215; these read SDGGSKSSSS and SEVS…SVAA. Lys-252 participates in a covalent cross-link: Glycyl lysine isopeptide (Lys-Gly) (interchain with G-Cter in SUMO). In terms of domain architecture, Bromo 2 spans 257-366; sequence QPLLPSMKPC…EVFDRRWAEL (110 aa). Positions 369–381 are enriched in low complexity; sequence SSSRASSVAPQSA. A disordered region spans residues 369-418; sequence SSSRASSVAPQSAPIAPTPKVAKSSAPKEPKESRKEHKKETTFEASGAKS. The span at 394–410 shows a compositional bias: basic and acidic residues; sequence APKEPKESRKEHKKETT. Residues 419–458 adopt a coiled-coil conformation; it reads EDLMQINNALSMIREREEKLKAELAAAQAIKDKLTSVKNR. The 86-residue stretch at 516–601 folds into the NET domain; the sequence is DSDDEDNKMA…TIPTLNGNGD (86 aa). Disordered regions lie at residues 594–814 and 819–838; these read PTLN…DEQT and MRME…VSLS. Low complexity predominate over residues 612 to 624; that stretch reads TSSGATGSKGSSS. The span at 684-696 shows a compositional bias: polar residues; it reads QPPSTSREWNQSS. Residues 708 to 736 show a composition bias toward low complexity; that stretch reads QPPMSRVPASSSTSVSAIGKNNAAASSNS. Residues 786–807 are compositionally biased toward polar residues; that stretch reads QFFQSQPTTSATIRSPTESQPG. Residues 819-832 are compositionally biased toward basic and acidic residues; the sequence is MRMEAKRARQKEDE.

This sequence belongs to the BET family. As to quaternary structure, interacts with acetylated histone H4. Interacts (via BROMO domain 2) with smo-1 and ubc-9. As to expression, expressed in T-cells, Q-cells, V5-cells and their descendants such as somatic gonad and syncytium.

It localises to the nucleus. The protein localises to the chromosome. Functionally, required for the establishment and maintenance of stable cell fate in several lineages including V5.pa, T, Z1/Z4 and QR lineages probably by repressing the expression of cell fate determinants. Required to maintain non-distal tip cell (DTC) fate of somatic gonadal cells through the htz-1-mediated repression of transcription factor ceh-22. Regulates the subnuclear localization of histone variant htz-1 in somatic gonadal cells. Plays a role in the attenuation of the let-60/ras pathway, probably by preventing expression of activators of the pathway. Involved in adult locomotion. Acts together with the sumoylation pathway to prevent muscle myosin depletion in aging adults probably by preventing myoblast growth factor receptor egl-15 overexpression. May play a role in vulva development. This Caenorhabditis elegans protein is Bromodomain-containing protein bet-1.